The sequence spans 465 residues: GTPase Der (465 aa).

EngA-type G domains are found at residues 3 to 167 (PLVA…PEEG) and 179 to 352 (VRIA…ASAT). Residues 9-16 (GRPNVGKS), 57-61 (DTGGI), 119-122 (NKID), 185-192 (GRPNVGKS), 232-236 (DTAGL), and 297-300 (NKWD) contribute to the GTP site. One can recognise a KH-like domain in the interval 353 to 437 (HEFSTSEVNQ…PVRFIFREGA (85 aa)).

It belongs to the TRAFAC class TrmE-Era-EngA-EngB-Septin-like GTPase superfamily. EngA (Der) GTPase family. As to quaternary structure, associates with the 50S ribosomal subunit.

In terms of biological role, GTPase that plays an essential role in the late steps of ribosome biogenesis. In Xanthomonas axonopodis pv. citri (strain 306), this protein is GTPase Der.